The sequence spans 95 residues: Aspartyl/glutamyl-tRNA(Asn/Gln) amidotransferase subunit C (95 aa).

This sequence belongs to the GatC family. As to quaternary structure, heterotrimer of A, B and C subunits.

The enzyme catalyses L-glutamyl-tRNA(Gln) + L-glutamine + ATP + H2O = L-glutaminyl-tRNA(Gln) + L-glutamate + ADP + phosphate + H(+). The catalysed reaction is L-aspartyl-tRNA(Asn) + L-glutamine + ATP + H2O = L-asparaginyl-tRNA(Asn) + L-glutamate + ADP + phosphate + 2 H(+). Functionally, allows the formation of correctly charged Asn-tRNA(Asn) or Gln-tRNA(Gln) through the transamidation of misacylated Asp-tRNA(Asn) or Glu-tRNA(Gln) in organisms which lack either or both of asparaginyl-tRNA or glutaminyl-tRNA synthetases. The reaction takes place in the presence of glutamine and ATP through an activated phospho-Asp-tRNA(Asn) or phospho-Glu-tRNA(Gln). This chain is Aspartyl/glutamyl-tRNA(Asn/Gln) amidotransferase subunit C, found in Azoarcus sp. (strain BH72).